The following is a 417-amino-acid chain: Serine hydroxymethyltransferase (417 aa).

Residues Leu-120 and 124–126 each bind (6S)-5,6,7,8-tetrahydrofolate; that span reads GHL. The residue at position 229 (Lys-229) is an N6-(pyridoxal phosphate)lysine. 354–356 is a (6S)-5,6,7,8-tetrahydrofolate binding site; the sequence is SPF.

It belongs to the SHMT family. As to quaternary structure, homodimer. Pyridoxal 5'-phosphate serves as cofactor.

Its subcellular location is the cytoplasm. The enzyme catalyses (6R)-5,10-methylene-5,6,7,8-tetrahydrofolate + glycine + H2O = (6S)-5,6,7,8-tetrahydrofolate + L-serine. Its pathway is one-carbon metabolism; tetrahydrofolate interconversion. The protein operates within amino-acid biosynthesis; glycine biosynthesis; glycine from L-serine: step 1/1. Catalyzes the reversible interconversion of serine and glycine with tetrahydrofolate (THF) serving as the one-carbon carrier. This reaction serves as the major source of one-carbon groups required for the biosynthesis of purines, thymidylate, methionine, and other important biomolecules. Also exhibits THF-independent aldolase activity toward beta-hydroxyamino acids, producing glycine and aldehydes, via a retro-aldol mechanism. This chain is Serine hydroxymethyltransferase, found in Acinetobacter baumannii (strain AB307-0294).